Here is a 674-residue protein sequence, read N- to C-terminus: DNA ligase (674 aa).

NAD(+)-binding positions include 42 to 46 (DNVYD), 91 to 92 (SM), and E121. Catalysis depends on K123, which acts as the N6-AMP-lysine intermediate. The NAD(+) site is built by R144, E178, K294, and K318. Zn(2+) contacts are provided by C412, C415, C430, and C435. The BRCT domain occupies 596 to 674 (VKDSFVAGKT…ETELLANLKD (79 aa)).

Belongs to the NAD-dependent DNA ligase family. LigA subfamily. Mg(2+) serves as cofactor. Mn(2+) is required as a cofactor.

It catalyses the reaction NAD(+) + (deoxyribonucleotide)n-3'-hydroxyl + 5'-phospho-(deoxyribonucleotide)m = (deoxyribonucleotide)n+m + AMP + beta-nicotinamide D-nucleotide.. Functionally, DNA ligase that catalyzes the formation of phosphodiester linkages between 5'-phosphoryl and 3'-hydroxyl groups in double-stranded DNA using NAD as a coenzyme and as the energy source for the reaction. It is essential for DNA replication and repair of damaged DNA. This Lacticaseibacillus casei (strain BL23) (Lactobacillus casei) protein is DNA ligase.